The following is a 247-amino-acid chain: ATP synthase subunit a, chloroplastic (247 aa).

5 helical membrane passes run 38–58 (QVLI…IIAV), 95–115 (VPFI…GALL), 134–154 (INTT…AGLT), 199–219 (LVVV…VMFL), and 220–240 (GLFT…AYIG).

This sequence belongs to the ATPase A chain family. F-type ATPases have 2 components, CF(1) - the catalytic core - and CF(0) - the membrane proton channel. CF(1) has five subunits: alpha(3), beta(3), gamma(1), delta(1), epsilon(1). CF(0) has four main subunits: a, b, b' and c.

It is found in the plastid. It localises to the chloroplast thylakoid membrane. In terms of biological role, key component of the proton channel; it plays a direct role in the translocation of protons across the membrane. In Dioscorea elephantipes (Elephant's foot yam), this protein is ATP synthase subunit a, chloroplastic.